Consider the following 297-residue polypeptide: MTTASATGIATLTSTGDVLDVWYPEIGSTDQSALTPLEGVDEDRNVTRKIVTTTIDTDAAPTDTYDAWLRLHLLSHRVFRPHTINLDGIFGLLNNVVWTNFGPCAVDGFALTRARLSRRGQVTVYSVDKFPRMVDYVVPSGVRIGDADRVRLGAYLADGTTVMHEGFVNFNAGTLGASMVEGRISAGVTVDDGTDVGGGASIMGTLSGGGQHVISLGKRCLLGANSGCGIPLGDDCIIEAGLYITAGTKVLFDGSLHKASTLAGSNGLIFRRDSVSGQVVAVPNTKVVELNTALHSN.

Asp148 and Glu165 together coordinate Mg(2+). The active-site Acyl-anhydride intermediate is Glu181. Succinyl-CoA is bound by residues Arg183, Gly198, Ser201, Ala224, 239 to 240 (EA), Gly247, Lys258, and 271 to 274 (RRDS).

The protein belongs to the type 2 tetrahydrodipicolinate N-succinyltransferase family. Homotrimer.

The protein resides in the cytoplasm. The catalysed reaction is (S)-2,3,4,5-tetrahydrodipicolinate + succinyl-CoA + H2O = (S)-2-succinylamino-6-oxoheptanedioate + CoA. The protein operates within amino-acid biosynthesis; L-lysine biosynthesis via DAP pathway; LL-2,6-diaminopimelate from (S)-tetrahydrodipicolinate (succinylase route): step 1/3. Catalyzes the conversion of the cyclic tetrahydrodipicolinate (THDP) into the acyclic N-succinyl-L-2-amino-6-oxopimelate using succinyl-CoA. The sequence is that of 2,3,4,5-tetrahydropyridine-2,6-dicarboxylate N-succinyltransferase from Corynebacterium glutamicum (strain ATCC 13032 / DSM 20300 / JCM 1318 / BCRC 11384 / CCUG 27702 / LMG 3730 / NBRC 12168 / NCIMB 10025 / NRRL B-2784 / 534).